Reading from the N-terminus, the 351-residue chain is Protein RecA (351 aa).

Position 68–75 (68–75 (GPESSGKT)) interacts with ATP.

It belongs to the RecA family.

It localises to the cytoplasm. In terms of biological role, can catalyze the hydrolysis of ATP in the presence of single-stranded DNA, the ATP-dependent uptake of single-stranded DNA by duplex DNA, and the ATP-dependent hybridization of homologous single-stranded DNAs. It interacts with LexA causing its activation and leading to its autocatalytic cleavage. The protein is Protein RecA of Thermotoga neapolitana (strain ATCC 49049 / DSM 4359 / NBRC 107923 / NS-E).